The primary structure comprises 315 residues: tRNA pseudouridine synthase B (315 aa).

Asp-54 functions as the Nucleophile in the catalytic mechanism.

This sequence belongs to the pseudouridine synthase TruB family. Type 1 subfamily.

It catalyses the reaction uridine(55) in tRNA = pseudouridine(55) in tRNA. In terms of biological role, responsible for synthesis of pseudouridine from uracil-55 in the psi GC loop of transfer RNAs. The protein is tRNA pseudouridine synthase B of Cupriavidus pinatubonensis (strain JMP 134 / LMG 1197) (Cupriavidus necator (strain JMP 134)).